A 121-amino-acid polypeptide reads, in one-letter code: Fluoride-specific ion channel FluC 1 (121 aa).

A run of 4 helical transmembrane segments spans residues 3–23, 29–49, 67–87, and 92–112; these read YLYI…LSML, IPLG…SIGA, TGLL…VTLF, and FILF…SCYL. The Na(+) site is built by glycine 71 and threonine 74.

The protein belongs to the fluoride channel Fluc/FEX (TC 1.A.43) family.

It localises to the cell membrane. The enzyme catalyses fluoride(in) = fluoride(out). Na(+) is not transported, but it plays an essential structural role and its presence is essential for fluoride channel function. Its function is as follows. Fluoride-specific ion channel. Important for reducing fluoride concentration in the cell, thus reducing its toxicity. The polypeptide is Fluoride-specific ion channel FluC 1 (Staphylococcus epidermidis (strain ATCC 35984 / DSM 28319 / BCRC 17069 / CCUG 31568 / BM 3577 / RP62A)).